We begin with the raw amino-acid sequence, 315 residues long: Peroxidase 1 (315 aa).

An N-terminal signal peptide occupies residues 1–21 (MASSSYTSLLVLVALVTAASA). Position 22 is a pyrrolidone carboxylic acid (Gln-22). Intrachain disulfides connect Cys-32-Cys-107, Cys-65-Cys-70, Cys-113-Cys-310, and Cys-193-Cys-219. The Proton acceptor role is filled by His-63. Positions 64, 67, 69, 71, and 73 each coordinate Ca(2+). Substrate is bound at residue Pro-155. Asn-158 carries an N-linked (GlcNAc...) asparagine glycan. His-186 contributes to the heme b binding site. Thr-187 is a binding site for Ca(2+). Positions 234, 237, and 242 each coordinate Ca(2+). N-linked (GlcNAc...) asparagine glycosylation is present at Asn-265.

Belongs to the peroxidase family. Classical plant (class III) peroxidase subfamily. It depends on Ca(2+) as a cofactor. The cofactor is heme b.

The protein resides in the secreted. It catalyses the reaction 2 a phenolic donor + H2O2 = 2 a phenolic radical donor + 2 H2O. Its function is as follows. Removal of H(2)O(2), oxidation of toxic reductants, biosynthesis and degradation of lignin, suberization, auxin catabolism, response to environmental stresses such as wounding, pathogen attack and oxidative stress. These functions might be dependent on each isozyme/isoform in each plant tissue. Functionally, involved in defense response to powdery meldew fungus. The protein is Peroxidase 1 of Hordeum vulgare (Barley).